The chain runs to 550 residues: CTP synthase (550 aa).

Residues 1–265 (MTKFIFVTGG…DEIVVEQLGL (265 aa)) are amidoligase domain. Ser13 is a binding site for CTP. Ser13 contributes to the UTP binding site. 14–19 (SLGKGI) provides a ligand contact to ATP. An L-glutamine-binding site is contributed by Tyr54. Asp71 contacts ATP. Positions 71 and 139 each coordinate Mg(2+). CTP-binding positions include 146–148 (DIE), 186–191 (KTKPTQ), and Lys222. Residues 186-191 (KTKPTQ) and Lys222 contribute to the UTP site. In terms of domain architecture, Glutamine amidotransferase type-1 spans 290–541 (TITLVGKYVD…IRAAAEHRRR (252 aa)). Gly351 contributes to the L-glutamine binding site. The active-site Nucleophile; for glutamine hydrolysis is the Cys378. L-glutamine-binding positions include 379-382 (LGMQ), Glu402, and Arg469. Active-site residues include His514 and Glu516.

It belongs to the CTP synthase family. Homotetramer.

It catalyses the reaction UTP + L-glutamine + ATP + H2O = CTP + L-glutamate + ADP + phosphate + 2 H(+). The enzyme catalyses L-glutamine + H2O = L-glutamate + NH4(+). The catalysed reaction is UTP + NH4(+) + ATP = CTP + ADP + phosphate + 2 H(+). It functions in the pathway pyrimidine metabolism; CTP biosynthesis via de novo pathway; CTP from UDP: step 2/2. With respect to regulation, allosterically activated by GTP, when glutamine is the substrate; GTP has no effect on the reaction when ammonia is the substrate. The allosteric effector GTP functions by stabilizing the protein conformation that binds the tetrahedral intermediate(s) formed during glutamine hydrolysis. Inhibited by the product CTP, via allosteric rather than competitive inhibition. Functionally, catalyzes the ATP-dependent amination of UTP to CTP with either L-glutamine or ammonia as the source of nitrogen. Regulates intracellular CTP levels through interactions with the four ribonucleotide triphosphates. The polypeptide is CTP synthase (Nitrosococcus oceani (strain ATCC 19707 / BCRC 17464 / JCM 30415 / NCIMB 11848 / C-107)).